The chain runs to 89 residues: Putative acyl-CoA-binding protein (89 aa).

The ACB domain maps to 3-88 (VEEQFKTSAE…VKELVEKNGL (86 aa)). Residues Lys-15, 30–34 (YSLYK), Lys-52, Lys-56, and Tyr-75 each bind an acyl-CoA.

Belongs to the ACBP family.

Binds medium- and long-chain acyl-CoA esters with very high affinity and may function as an intracellular carrier of acyl-CoA esters. The protein is Putative acyl-CoA-binding protein of Hypsibius exemplaris (Freshwater tardigrade).